The primary structure comprises 386 residues: Bifunctional enzyme IspD/IspF (386 aa).

The segment at 1-226 (MATPSPLPSF…EDFMADLLPV (226 aa)) is 2-C-methyl-D-erythritol 4-phosphate cytidylyltransferase. Positions 227 to 386 (RVGTGFDVHK…ATVVRKDTPA (160 aa)) are 2-C-methyl-D-erythritol 2,4-cyclodiphosphate synthase. The a divalent metal cation site is built by D233 and H235. 4-CDP-2-C-methyl-D-erythritol 2-phosphate is bound by residues 233–235 (DVH) and 259–260 (HS). Residue H267 coordinates a divalent metal cation. 4-CDP-2-C-methyl-D-erythritol 2-phosphate-binding positions include 281-283 (DIG), 357-360 (TTTE), F364, and R367.

The protein in the N-terminal section; belongs to the IspD/TarI cytidylyltransferase family. IspD subfamily. In the C-terminal section; belongs to the IspF family. A divalent metal cation is required as a cofactor.

It catalyses the reaction 2-C-methyl-D-erythritol 4-phosphate + CTP + H(+) = 4-CDP-2-C-methyl-D-erythritol + diphosphate. It carries out the reaction 4-CDP-2-C-methyl-D-erythritol 2-phosphate = 2-C-methyl-D-erythritol 2,4-cyclic diphosphate + CMP. It functions in the pathway isoprenoid biosynthesis; isopentenyl diphosphate biosynthesis via DXP pathway; isopentenyl diphosphate from 1-deoxy-D-xylulose 5-phosphate: step 2/6. Its pathway is isoprenoid biosynthesis; isopentenyl diphosphate biosynthesis via DXP pathway; isopentenyl diphosphate from 1-deoxy-D-xylulose 5-phosphate: step 4/6. In terms of biological role, bifunctional enzyme that catalyzes the formation of 4-diphosphocytidyl-2-C-methyl-D-erythritol from CTP and 2-C-methyl-D-erythritol 4-phosphate (MEP) (IspD), and catalyzes the conversion of 4-diphosphocytidyl-2-C-methyl-D-erythritol 2-phosphate (CDP-ME2P) to 2-C-methyl-D-erythritol 2,4-cyclodiphosphate (ME-CPP) with a corresponding release of cytidine 5-monophosphate (CMP) (IspF). This chain is Bifunctional enzyme IspD/IspF, found in Erythrobacter litoralis (strain HTCC2594).